The primary structure comprises 159 residues: Ribosomal RNA large subunit methyltransferase H (159 aa).

S-adenosyl-L-methionine contacts are provided by residues Leu-76, Gly-108, and Phe-127–Leu-132.

It belongs to the RNA methyltransferase RlmH family. As to quaternary structure, homodimer.

The protein resides in the cytoplasm. The catalysed reaction is pseudouridine(1915) in 23S rRNA + S-adenosyl-L-methionine = N(3)-methylpseudouridine(1915) in 23S rRNA + S-adenosyl-L-homocysteine + H(+). In terms of biological role, specifically methylates the pseudouridine at position 1915 (m3Psi1915) in 23S rRNA. The polypeptide is Ribosomal RNA large subunit methyltransferase H (Lysinibacillus sphaericus (strain C3-41)).